The chain runs to 251 residues: MLLICISVLAAISAHPLSSGEMRAAVSNLVREIDSTHLTTKPSLKIIEGLEDNTVSTGESVTLRCDVLSTPTGVIYWEKDGQRIQGDKELNVFEKVLNAMGPTVESGIITSSYQIPCANLHHIGSYKCVATNGHDTVESSAKISVEGQTVKCKSTRRSAPVITMSTESRFELQDNAATLICRADRRANWNWMFEDKKIDFDSGRYELLPSGDLLIRKIQWSDMGSYFCIAHNKYGESRGETFLYPTKKHIA.

The first 19 residues, 1 to 19 (MLLICISVLAAISAHPLSS), serve as a signal peptide directing secretion. Ig-like C2-type domains are found at residues 42–144 (PSLK…AKIS) and 160–244 (PVIT…TFLY). Intrachain disulfides connect C65–C128 and C181–C228.

In terms of tissue distribution, expressed in PVT, AIM and ASI neurons, in vulva and weakly in body wall muscles.

The protein resides in the secreted. Its function is as follows. Required for maintaining axon position of PVQ and PVP neurons postembryonically in the ventral nerve cord (VNC) by preventing axons drifting into the opposite side of the VNC that could occur during body growth and movement. The chain is Zwei Ig domain protein zig-3 from Caenorhabditis elegans.